A 379-amino-acid polypeptide reads, in one-letter code: Homoserine O-acetyltransferase (379 aa).

The interval M1–R24 is disordered. One can recognise an AB hydrolase-1 domain in the interval N60 to E365. S165 acts as the Nucleophile in catalysis. R236 lines the substrate pocket. Active-site residues include D329 and H359. Residue D360 participates in substrate binding.

The protein belongs to the AB hydrolase superfamily. MetX family. In terms of assembly, homodimer.

It localises to the cytoplasm. The catalysed reaction is L-homoserine + acetyl-CoA = O-acetyl-L-homoserine + CoA. Its pathway is amino-acid biosynthesis; L-methionine biosynthesis via de novo pathway; O-acetyl-L-homoserine from L-homoserine: step 1/1. In terms of biological role, transfers an acetyl group from acetyl-CoA to L-homoserine, forming acetyl-L-homoserine. The protein is Homoserine O-acetyltransferase of Thermobifida fusca (strain YX).